Consider the following 364-residue polypeptide: Biotin synthase (364 aa).

Residues 68–303 (CCGNTVDLCS…QQILRYAGGR (236 aa)) enclose the Radical SAM core domain. Residues C86, C90, and C93 each coordinate [4Fe-4S] cluster. Residues C131, C168, C228, and R298 each contribute to the [2Fe-2S] cluster site.

The protein belongs to the radical SAM superfamily. Biotin synthase family. Homodimer. The cofactor is [4Fe-4S] cluster. [2Fe-2S] cluster serves as cofactor.

It carries out the reaction (4R,5S)-dethiobiotin + (sulfur carrier)-SH + 2 reduced [2Fe-2S]-[ferredoxin] + 2 S-adenosyl-L-methionine = (sulfur carrier)-H + biotin + 2 5'-deoxyadenosine + 2 L-methionine + 2 oxidized [2Fe-2S]-[ferredoxin]. It functions in the pathway cofactor biosynthesis; biotin biosynthesis; biotin from 7,8-diaminononanoate: step 2/2. Its function is as follows. Catalyzes the conversion of dethiobiotin (DTB) to biotin by the insertion of a sulfur atom into dethiobiotin via a radical-based mechanism. The protein is Biotin synthase of Microcystis aeruginosa (strain NIES-843 / IAM M-2473).